A 607-amino-acid chain; its full sequence is CRS2-associated factor 2, chloroplastic (607 aa).

Positions 1-75 (MSPPPPQRPS…GNGGNPAFRA (75 aa)) are disordered. The transit peptide at 1 to 79 (MSPPPPQRPS…NPAFRAPHLR (79 aa)) directs the protein to the chloroplast. 2 consecutive CRM domains span residues 228-324 (EPLT…TRPR) and 346-442 (EGLT…YPKP). The segment at 482–505 (KMFELWTNAIESSVALMLDDAEVD) is CRS2 binding. The disordered stretch occupies residues 550–576 (TEDEPETGTLEPQQHEFTESSDVAEDD).

As to quaternary structure, interacts with CRS2 and RNA. Part of large ribonucleo-protein complexes that include group IIB introns, CRS2 and CAF2.

It is found in the plastid. The protein localises to the chloroplast stroma. Functionally, required for the splicing of group IIB introns in chloroplasts. Forms splicing particles with CRS2. Interacts with RNA and confers intron specificity of the splicing particles. This is CRS2-associated factor 2, chloroplastic from Oryza sativa subsp. japonica (Rice).